A 361-amino-acid polypeptide reads, in one-letter code: Phospho-N-acetylmuramoyl-pentapeptide-transferase (361 aa).

10 helical membrane-spanning segments follow: residues 25-45 (RGIL…PAVI), 73-93 (TMGG…WGDL), 98-118 (VWLV…DDWI), 139-159 (IFGL…AAIT), 168-188 (IALP…IVGF), 200-220 (GLAI…AYAS), 237-257 (AGEL…FLWF), 264-284 (VFMG…VAVI), 289-309 (LVLV…MIQV), and 339-359 (VIVR…ATLK).

Belongs to the glycosyltransferase 4 family. MraY subfamily. Mg(2+) serves as cofactor.

The protein localises to the cell inner membrane. The enzyme catalyses UDP-N-acetyl-alpha-D-muramoyl-L-alanyl-gamma-D-glutamyl-meso-2,6-diaminopimeloyl-D-alanyl-D-alanine + di-trans,octa-cis-undecaprenyl phosphate = di-trans,octa-cis-undecaprenyl diphospho-N-acetyl-alpha-D-muramoyl-L-alanyl-D-glutamyl-meso-2,6-diaminopimeloyl-D-alanyl-D-alanine + UMP. Its pathway is cell wall biogenesis; peptidoglycan biosynthesis. Catalyzes the initial step of the lipid cycle reactions in the biosynthesis of the cell wall peptidoglycan: transfers peptidoglycan precursor phospho-MurNAc-pentapeptide from UDP-MurNAc-pentapeptide onto the lipid carrier undecaprenyl phosphate, yielding undecaprenyl-pyrophosphoryl-MurNAc-pentapeptide, known as lipid I. This Xanthomonas campestris pv. campestris (strain 8004) protein is Phospho-N-acetylmuramoyl-pentapeptide-transferase.